The chain runs to 727 residues: Glucans biosynthesis glucosyltransferase H (727 aa).

Residues 18–41 are disordered; the sequence is SAMPNERPGAMEPQKLSKMPEGFP. The next 7 helical transmembrane spans lie at 58 to 78, 97 to 117, 278 to 298, 408 to 428, 460 to 480, 496 to 516, and 572 to 592; these read FLVV…MGAV, VNFC…LILL, LQQF…GWWV, IMAY…LMLA, LFYI…LLLL, IFSV…MMFI, and LLAW…ISAW.

It belongs to the glycosyltransferase 2 family. OpgH subfamily.

The protein resides in the cell inner membrane. It functions in the pathway glycan metabolism; osmoregulated periplasmic glucan (OPG) biosynthesis. Its function is as follows. Involved in the biosynthesis of osmoregulated periplasmic glucans (OPGs). This Shewanella baltica (strain OS155 / ATCC BAA-1091) protein is Glucans biosynthesis glucosyltransferase H.